The primary structure comprises 502 residues: CBL-interacting serine/threonine-protein kinase 13 (502 aa).

The interval 32–51 is disordered; it reads TNKETSTPESPRSPRTPQGS. Positions 35 to 48 are enriched in low complexity; sequence ETSTPESPRSPRTP. Residues 57–311 form the Protein kinase domain; the sequence is YEIGKLLGHG…IPEIMKHRWF (255 aa). ATP contacts are provided by residues 63–71 and Lys86; that span reads LGHGSFAKV. Catalysis depends on Asp179, which acts as the Proton acceptor. Residues 197–226 form an activation loop region; it reads DFGLSVVSEQLKQEGICQTFCGTPAYLAPE. Ser201 is subject to Phosphoserine. Thr215 bears the Phosphothreonine mark. Residues 331–359 are disordered; it reads DDDNDDDDSSSLSSGRSSTASEGDAEFDI. Low complexity predominate over residues 340 to 352; it reads SSLSSGRSSTASE. The NAF domain occupies 366–387; the sequence is PRPASLNAFDILSFSDLSGLFE. The segment at 390-419 is PPI; sequence GQGARFVSAAPMTKIISKLEEIAKEVKFMV.

This sequence belongs to the protein kinase superfamily. CAMK Ser/Thr protein kinase family. SNF1 subfamily. Interacts with CBL2 and CBL3. The cofactor is Mn(2+).

The enzyme catalyses L-seryl-[protein] + ATP = O-phospho-L-seryl-[protein] + ADP + H(+). It carries out the reaction L-threonyl-[protein] + ATP = O-phospho-L-threonyl-[protein] + ADP + H(+). Functionally, CIPK serine-threonine protein kinases interact with CBL proteins. Binding of a CBL protein to the regulatory NAF domain of CIPK protein lead to the activation of the kinase in a calcium-dependent manner. The sequence is that of CBL-interacting serine/threonine-protein kinase 13 (CIPK13) from Arabidopsis thaliana (Mouse-ear cress).